The following is a 206-amino-acid chain: Imidazoleglycerol-phosphate dehydratase (206 aa).

Belongs to the imidazoleglycerol-phosphate dehydratase family.

Its subcellular location is the cytoplasm. The catalysed reaction is D-erythro-1-(imidazol-4-yl)glycerol 3-phosphate = 3-(imidazol-4-yl)-2-oxopropyl phosphate + H2O. It participates in amino-acid biosynthesis; L-histidine biosynthesis; L-histidine from 5-phospho-alpha-D-ribose 1-diphosphate: step 6/9. The sequence is that of Imidazoleglycerol-phosphate dehydratase from Leptospira interrogans serogroup Icterohaemorrhagiae serovar copenhageni (strain Fiocruz L1-130).